A 399-amino-acid polypeptide reads, in one-letter code: uncharacterized protein (399 aa).

The disordered stretch occupies residues 375–399 (AAGGHRGSHGKSEQAATVRVVDDRR).

The protein belongs to the mycobacterial PPE family.

This is an uncharacterized protein from Mycobacterium tuberculosis (strain ATCC 25618 / H37Rv).